The chain runs to 43 residues: Holotricin-1 (43 aa).

3 disulfides stabilise this stretch: Cys-3/Cys-34, Cys-20/Cys-39, and Cys-24/Cys-41.

It belongs to the invertebrate defensin family. Type 1 subfamily. As to expression, hemolymph.

It is found in the secreted. Shows potent antibacterial activity against Gram-positive bacteria. This is Holotricin-1 from Holotrichia diomphalia (Korean black chafer).